A 204-amino-acid polypeptide reads, in one-letter code: Bombinin-like peptides 1 (204 aa).

The or 18 signal peptide spans 1–16 (MNFKYIVAVSILIASA). Asparagine amide is present on residues Asn70 and Asn133.

Belongs to the bombinin family. Expressed by the skin glands.

It is found in the secreted. Functionally, has antimicrobial activity, but no hemolytic activity. Preference on killing Gram-negative non-enteric bacteria. This is Bombinin-like peptides 1 from Bombina orientalis (Oriental fire-bellied toad).